The chain runs to 65 residues: Large ribosomal subunit protein bL31 (65 aa).

Positions 16, 18, 36, and 39 each coordinate Zn(2+).

Belongs to the bacterial ribosomal protein bL31 family. Type A subfamily. Part of the 50S ribosomal subunit. It depends on Zn(2+) as a cofactor.

Binds the 23S rRNA. This Geotalea uraniireducens (strain Rf4) (Geobacter uraniireducens) protein is Large ribosomal subunit protein bL31.